The following is a 102-amino-acid chain: Ribosomal silencing factor RsfS (102 aa).

Belongs to the Iojap/RsfS family. In terms of assembly, interacts with ribosomal protein uL14 (rplN).

The protein resides in the cytoplasm. Functions as a ribosomal silencing factor. Interacts with ribosomal protein uL14 (rplN), blocking formation of intersubunit bridge B8. Prevents association of the 30S and 50S ribosomal subunits and the formation of functional ribosomes, thus repressing translation. This is Ribosomal silencing factor RsfS from Haemophilus influenzae (strain ATCC 51907 / DSM 11121 / KW20 / Rd).